The chain runs to 1155 residues: Protein BREAST CANCER SUSCEPTIBILITY 2 homolog B (1155 aa).

BRCA2 repeat units lie at residues 63–97, 116–150, 163–197, and 257–291; these read MPGE…ENVA, TAET…SDMI, FGVP…LEED, and LKVP…DPEL.

As to quaternary structure, interacts with RAD51 and DMC1. Interacts with DSS1(I) and DSS1(V). Can interact with both RAD51 and DSS1(I) or both DMC1 and DSS1(I) in a tripartite complex. In terms of tissue distribution, expressed in flower buds.

In terms of biological role, involved in double-strand break repair and/or homologous recombination by mediating RAD51- and DMC1-facilitated DNA repair. Plays an essential role in both somatic and meiotic homologous recombination. Is crucial for the formation of RAD51 and DMC1 foci during male meiotic homologous recombination in prophase I. The chain is Protein BREAST CANCER SUSCEPTIBILITY 2 homolog B from Arabidopsis thaliana (Mouse-ear cress).